The primary structure comprises 499 residues: Glycerol kinase (499 aa).

Thr-13 provides a ligand contact to ADP. The ATP site is built by Thr-13, Thr-14, and Ser-15. Position 13 (Thr-13) interacts with sn-glycerol 3-phosphate. Arg-17 contacts ADP. Positions 83, 84, 135, and 245 each coordinate sn-glycerol 3-phosphate. Glycerol contacts are provided by Arg-83, Glu-84, Tyr-135, Asp-245, and Gln-246. Positions 267 and 310 each coordinate ADP. Positions 267, 310, 314, and 411 each coordinate ATP. Positions 411 and 415 each coordinate ADP.

The protein belongs to the FGGY kinase family.

It carries out the reaction glycerol + ATP = sn-glycerol 3-phosphate + ADP + H(+). The protein operates within polyol metabolism; glycerol degradation via glycerol kinase pathway; sn-glycerol 3-phosphate from glycerol: step 1/1. Inhibited by fructose 1,6-bisphosphate (FBP). Functionally, key enzyme in the regulation of glycerol uptake and metabolism. Catalyzes the phosphorylation of glycerol to yield sn-glycerol 3-phosphate. The polypeptide is Glycerol kinase (Xylella fastidiosa (strain 9a5c)).